The chain runs to 276 residues: Ribosomal RNA small subunit methyltransferase A (276 aa).

Residues N28, L30, G55, E77, D103, and N124 each coordinate S-adenosyl-L-methionine.

It belongs to the class I-like SAM-binding methyltransferase superfamily. rRNA adenine N(6)-methyltransferase family. RsmA subfamily.

The protein localises to the cytoplasm. The catalysed reaction is adenosine(1518)/adenosine(1519) in 16S rRNA + 4 S-adenosyl-L-methionine = N(6)-dimethyladenosine(1518)/N(6)-dimethyladenosine(1519) in 16S rRNA + 4 S-adenosyl-L-homocysteine + 4 H(+). Functionally, specifically dimethylates two adjacent adenosines (A1518 and A1519) in the loop of a conserved hairpin near the 3'-end of 16S rRNA in the 30S particle. May play a critical role in biogenesis of 30S subunits. This chain is Ribosomal RNA small subunit methyltransferase A, found in Agrobacterium fabrum (strain C58 / ATCC 33970) (Agrobacterium tumefaciens (strain C58)).